A 299-amino-acid polypeptide reads, in one-letter code: ATP phosphoribosyltransferase (299 aa).

The protein belongs to the ATP phosphoribosyltransferase family. Long subfamily. Mg(2+) serves as cofactor.

It localises to the cytoplasm. The catalysed reaction is 1-(5-phospho-beta-D-ribosyl)-ATP + diphosphate = 5-phospho-alpha-D-ribose 1-diphosphate + ATP. The protein operates within amino-acid biosynthesis; L-histidine biosynthesis; L-histidine from 5-phospho-alpha-D-ribose 1-diphosphate: step 1/9. Feedback inhibited by histidine. Functionally, catalyzes the condensation of ATP and 5-phosphoribose 1-diphosphate to form N'-(5'-phosphoribosyl)-ATP (PR-ATP). Has a crucial role in the pathway because the rate of histidine biosynthesis seems to be controlled primarily by regulation of HisG enzymatic activity. The chain is ATP phosphoribosyltransferase from Shewanella baltica (strain OS155 / ATCC BAA-1091).